The chain runs to 715 residues: MAADESSQNTLRLQFKAMQEMQHKRLQKQMEKKREKELSLKSRADDQEEPLEVSDGLSLLHAGEPNSKNSFEKRVLEDEIEHLRNELRETVDENGRLYKLLKERDFEIKHLKKKIEEDRFAFTGTAGVAGDVVATKIVELSKKNRLLMAESEGAKTRVKQLTNRIQELERELQTALTRLSAKGATDAGAKPPRAQMGDRALLETPEVKALQDRLVATNLKMSDLRNQIQSVKQELRMAQKVLAREVGEDINVQQLLSSPGTWRGRAQQILVLQSKVQELEKQLGQARSQSAGTASDELSVYPDPRKLSAQEKNLLRIRSLEREKQEGLEKLASERDVLQRELEELKKKFEGMRSRNKLLSSEMKTLKSQMGTLVEKGRHDDELIDALMDQLKQLQEILGSLSLQEEKTRVSQHHLDQQLNSEAQRSNSLVAQLQAMVAEREAKVRQLEMEIGQLNVHYLRNKGVGEGSSGREVSPAYTQFLEDPGLTKSPASAGDHVGRLGSSRSVTSLGHTLVESALTRPSLPSPHRTSPRFSDSPEQKGWQAQVSEIKALWQAAEVERDRLTEFVTVLQKRVEESNSKLLESERKLQEERHRTVVLEQHLEKIRLEPGKASASQRAAPRTKTGLPTSNNRHNPTGSEKKDPSFAQLSDVPVESQMEELTTRLAIQVEENEMLKAALGSALRGKEEDFRMYHEILGQVKSVFLQALRQQKTGKQ.

Coiled-coil stretches lie at residues 16 to 105 and 134 to 458; these read KAMQ…KERD and ATKI…NVHY. Residues 20–65 form a disordered region; it reads EMQHKRLQKQMEKKREKELSLKSRADDQEEPLEVSDGLSLLHAGEP. Positions 28–45 are enriched in basic and acidic residues; it reads KQMEKKREKELSLKSRAD. S258, S469, and S536 each carry phosphoserine. 2 disordered regions span residues 482-541 and 607-645; these read EDPG…EQKG and LEPG…DPSF. Residues 554–608 adopt a coiled-coil conformation; the sequence is QAAEVERDRLTEFVTVLQKRVEESNSKLLESERKLQEERHRTVVLEQHLEKIRLE. Residues 625 to 637 show a composition bias toward polar residues; the sequence is GLPTSNNRHNPTG. Residues 653–683 adopt a coiled-coil conformation; sequence VESQMEELTTRLAIQVEENEMLKAALGSALR.

Interacts with PCM1, CEP290 and PCNT.

The protein localises to the cytoplasm. Its subcellular location is the cytoskeleton. The protein resides in the microtubule organizing center. It localises to the centrosome. It is found in the centriolar satellite. The protein localises to the cilium basal body. Required for primary cilia formation and promotes the localization of the ciliopathy protein BBS4 to both centriolar satellites and cilia. The sequence is that of Coiled-coil domain-containing protein 13 from Homo sapiens (Human).